The primary structure comprises 375 residues: Carbamoyl phosphate synthase small chain (375 aa).

The CPSase stretch occupies residues 1–186; it reads MKAILALEDG…IVDGTYAWPG (186 aa). The L-glutamine site is built by Ser45, Gly238, and Gly240. One can recognise a Glutamine amidotransferase type-1 domain in the interval 190 to 375; that stretch reads RLVVFDMGIK…RNLVRKETGK (186 aa). Residue Cys265 is the Nucleophile of the active site. The L-glutamine site is built by Leu266, Gln269, Asn307, Gly309, and Phe310. Catalysis depends on residues His348 and Glu350.

This sequence belongs to the CarA family. Composed of two chains; the small (or glutamine) chain promotes the hydrolysis of glutamine to ammonia, which is used by the large (or ammonia) chain to synthesize carbamoyl phosphate. Tetramer of heterodimers (alpha,beta)4.

It carries out the reaction hydrogencarbonate + L-glutamine + 2 ATP + H2O = carbamoyl phosphate + L-glutamate + 2 ADP + phosphate + 2 H(+). The catalysed reaction is L-glutamine + H2O = L-glutamate + NH4(+). The protein operates within amino-acid biosynthesis; L-arginine biosynthesis; carbamoyl phosphate from bicarbonate: step 1/1. Its pathway is pyrimidine metabolism; UMP biosynthesis via de novo pathway; (S)-dihydroorotate from bicarbonate: step 1/3. Functionally, small subunit of the glutamine-dependent carbamoyl phosphate synthetase (CPSase). CPSase catalyzes the formation of carbamoyl phosphate from the ammonia moiety of glutamine, carbonate, and phosphate donated by ATP, constituting the first step of 2 biosynthetic pathways, one leading to arginine and/or urea and the other to pyrimidine nucleotides. The small subunit (glutamine amidotransferase) binds and cleaves glutamine to supply the large subunit with the substrate ammonia. The chain is Carbamoyl phosphate synthase small chain from Solidesulfovibrio magneticus (strain ATCC 700980 / DSM 13731 / RS-1) (Desulfovibrio magneticus).